The primary structure comprises 393 residues: Neuroplastin (393 aa).

An N-terminal signal peptide occupies residues 1–28 (MSGSSLPGALALSLLLVSGSLLPGPGAA). 3 consecutive Ig-like domains span residues 29 to 134 (QNAG…PSIT), 148 to 234 (PRIV…IEVK), and 237 to 327 (PDIT…ASVS). Over 29-338 (QNAGFVKSPM…VLRVRSHLAP (310 aa)) the chain is Extracellular. A disulfide bridge connects residues C52 and C116. The narpin; mediates binding with FGFR1 and has antidepressant-like activity stretch occupies residues 149–161 (RIVTSEEVIIRDS). A disulfide bridge connects residues C169 and C217. N170, N196, N228, N283, N295, and N316 each carry an N-linked (GlcNAc...) asparagine glycan. C258 and C315 form a disulfide bridge. The helical transmembrane segment at 339 to 359 (LWPFLGILAEIIILVVIIVVY) threads the bilayer. At 360–393 (EKRKRPDEVPDAGPMKTNSTNNHKDKNLRQRNTN) the chain is on the cytoplasmic side. A disordered region spans residues 366–393 (DEVPDAGPMKTNSTNNHKDKNLRQRNTN).

In terms of assembly, interacts with ATP2B1; this interaction stabilizes ATP2B1 and increases ATPase activity; this interaction controls T cell calcium homeostasis following T cell activation. Interacts with XKR8; promoting its localization at the cell membrane. In terms of processing, isoform 1 and isoform 2 are N-glycosylated. Isoform 1 is ubiquitously expressed. Isoform 2 is brain-specific. In brain isoform 2 is highly expressed in hippocampus and cerebral cortex and weakly in cerebellum and lower brain regions. In the hippocampus isoform 2 is found in the dentate gyrus and CA1-CA4, the striatum oriens of CA3 shows the higher level.

Its subcellular location is the cell membrane. It localises to the postsynaptic density. Its function is as follows. Probable homophilic and heterophilic cell adhesion molecule involved in long term potentiation at hippocampal excitatory synapses through activation of p38MAPK. May also regulate neurite outgrowth by activating the FGFR1 signaling pathway. May play a role in synaptic plasticity. Also acts as a chaperone for ATP2B1; stabilizes ATP2B1 and increases its ATPase activity. Promotes localization of XKR8 at the cell membrane. This Rattus norvegicus (Rat) protein is Neuroplastin (Nptn).